The following is a 456-amino-acid chain: Mitochondrial import inner membrane translocase subunit TIM50 (456 aa).

Residues 1 to 22 (MSLSKLSQKCFSRHHARTFIRF) constitute a mitochondrion transit peptide. Residues 23–171 (SSSDFQSLLG…RRKRMERNTR (149 aa)) lie on the Mitochondrial matrix side of the membrane. Disordered regions lie at residues 101–120 (ETEK…AIDE) and 132–165 (EEAA…RRKR). A compositionally biased stretch (polar residues) spans 137–153 (SKTSAPSGSSGDNNDQP). A helical membrane pass occupies residues 172-192 (IGGYVLLGGSVIGFISFCFYY). Residues 193–456 (GRAQRDEAGN…LFGFRRHASA (264 aa)) lie on the Mitochondrial intermembrane side of the membrane. The FCP1 homology domain occupies 247–391 (YLQPKYTIVI…VDLAELLKTI (145 aa)).

The protein belongs to the TIM50 family. Component of the TIM23 complex at least composed of tim-23, tim-17 and tim-50.

The protein localises to the mitochondrion inner membrane. Its function is as follows. Essential component of the TIM23 complex, a complex that mediates the translocation of transit peptide-containing proteins across the mitochondrial inner membrane. This Caenorhabditis briggsae protein is Mitochondrial import inner membrane translocase subunit TIM50 (scpl-4).